The sequence spans 215 residues: Octanoyltransferase (215 aa).

In terms of domain architecture, BPL/LPL catalytic spans 35–210 (PDTPDQLWVV…HCLEAIVEYG (176 aa)). Residues 74–81 (RGGQVTYH), 141–143 (SVG), and 154–156 (GLA) each bind substrate. The active-site Acyl-thioester intermediate is Cys-172.

The protein belongs to the LipB family.

It is found in the cytoplasm. The catalysed reaction is octanoyl-[ACP] + L-lysyl-[protein] = N(6)-octanoyl-L-lysyl-[protein] + holo-[ACP] + H(+). Its pathway is protein modification; protein lipoylation via endogenous pathway; protein N(6)-(lipoyl)lysine from octanoyl-[acyl-carrier-protein]: step 1/2. In terms of biological role, catalyzes the transfer of endogenously produced octanoic acid from octanoyl-acyl-carrier-protein onto the lipoyl domains of lipoate-dependent enzymes. Lipoyl-ACP can also act as a substrate although octanoyl-ACP is likely to be the physiological substrate. The polypeptide is Octanoyltransferase (Alkalilimnicola ehrlichii (strain ATCC BAA-1101 / DSM 17681 / MLHE-1)).